The sequence spans 350 residues: Methionine import ATP-binding protein MetN (350 aa).

Residues 2–241 (IQIKNLKKEY…PQAPVTRSFV (240 aa)) enclose the ABC transporter domain. An ATP-binding site is contributed by 38–45 (GHSGAGKS).

This sequence belongs to the ABC transporter superfamily. Methionine importer (TC 3.A.1.24) family. In terms of assembly, the complex is composed of two ATP-binding proteins (MetN), two transmembrane proteins (MetI) and a solute-binding protein (MetQ).

The protein localises to the cell inner membrane. It carries out the reaction L-methionine(out) + ATP + H2O = L-methionine(in) + ADP + phosphate + H(+). It catalyses the reaction D-methionine(out) + ATP + H2O = D-methionine(in) + ADP + phosphate + H(+). Part of the ABC transporter complex MetNIQ involved in methionine import. Responsible for energy coupling to the transport system. In Francisella tularensis subsp. tularensis (strain SCHU S4 / Schu 4), this protein is Methionine import ATP-binding protein MetN.